The sequence spans 443 residues: UDP-N-acetylmuramate--L-alanine ligase (443 aa).

Position 110-116 (110-116 (GAHGKTS)) interacts with ATP.

This sequence belongs to the MurCDEF family.

The protein resides in the cytoplasm. It carries out the reaction UDP-N-acetyl-alpha-D-muramate + L-alanine + ATP = UDP-N-acetyl-alpha-D-muramoyl-L-alanine + ADP + phosphate + H(+). It functions in the pathway cell wall biogenesis; peptidoglycan biosynthesis. Cell wall formation. This Streptococcus equi subsp. zooepidemicus (strain H70) protein is UDP-N-acetylmuramate--L-alanine ligase.